A 617-amino-acid chain; its full sequence is Protein kinase STUNTED (617 aa).

Residues 162–187 are disordered; sequence SSELSEGFSDKDLAKTTGQEKRKISG. Residues 169–184 show a composition bias toward basic and acidic residues; that stretch reads FSDKDLAKTTGQEKRK. One can recognise a Protein kinase domain in the interval 277-555; that stretch reads FSLENLIGKG…RGEDDVSKWV (279 aa). ATP contacts are provided by residues 283–291 and Lys305; that span reads IGKGGCNEV. Position 350 is a phosphotyrosine (Tyr350). Asp399 (proton acceptor) is an active-site residue. A Phosphoserine modification is found at Ser403. Phosphothreonine is present on Thr439. Tyr447 carries the post-translational modification Phosphotyrosine. Positions 590–617 are disordered; that stretch reads DSVSNSSLERSNNSLFSSSSSSSQELQS. Low complexity predominate over residues 591–617; it reads SVSNSSLERSNNSLFSSSSSSSQELQS.

The protein belongs to the protein kinase superfamily. Ser/Thr protein kinase family. As to expression, expressed ubiquitously, mostly in roots, to a lower extent in leaves, floral buds and stems, and, at low levels, in flowers and siliques.

It localises to the cytoplasm. Functionally, promotes cell proliferation in the gibberellic acid (GA) signaling pathway, acting downstream of RGA, and possibly through a negative regulation of two cyclin-dependent kinase inhibitors SIM and SMR1. The sequence is that of Protein kinase STUNTED from Arabidopsis thaliana (Mouse-ear cress).